The chain runs to 448 residues: Exodeoxyribonuclease 7 large subunit (448 aa).

Belongs to the XseA family. In terms of assembly, heterooligomer composed of large and small subunits.

Its subcellular location is the cytoplasm. The enzyme catalyses Exonucleolytic cleavage in either 5'- to 3'- or 3'- to 5'-direction to yield nucleoside 5'-phosphates.. In terms of biological role, bidirectionally degrades single-stranded DNA into large acid-insoluble oligonucleotides, which are then degraded further into small acid-soluble oligonucleotides. The protein is Exodeoxyribonuclease 7 large subunit of Exiguobacterium sp. (strain ATCC BAA-1283 / AT1b).